We begin with the raw amino-acid sequence, 495 residues long: Glycerol kinase (495 aa).

ADP is bound at residue T13. ATP contacts are provided by T13, T14, and S15. T13 contacts sn-glycerol 3-phosphate. R17 contacts ADP. R83, E84, Y135, and D244 together coordinate sn-glycerol 3-phosphate. Residues R83, E84, Y135, D244, and Q245 each contribute to the glycerol site. The ADP site is built by T266 and G309. ATP contacts are provided by T266, G309, Q313, and G410. G410 and N414 together coordinate ADP.

The protein belongs to the FGGY kinase family.

The enzyme catalyses glycerol + ATP = sn-glycerol 3-phosphate + ADP + H(+). It functions in the pathway polyol metabolism; glycerol degradation via glycerol kinase pathway; sn-glycerol 3-phosphate from glycerol: step 1/1. With respect to regulation, inhibited by fructose 1,6-bisphosphate (FBP). Functionally, key enzyme in the regulation of glycerol uptake and metabolism. Catalyzes the phosphorylation of glycerol to yield sn-glycerol 3-phosphate. In Shewanella amazonensis (strain ATCC BAA-1098 / SB2B), this protein is Glycerol kinase.